The sequence spans 1478 residues: Serine/threonine-protein kinase BCK1/SLK1/SSP31 (1478 aa).

4 disordered regions span residues 1-70, 99-126, 217-359, and 373-427; these read MPFL…TSSQ, TSFTNSSYKNDNGPSSLSDSRKSSGGNS, NVTN…RRHH, and FGSG…KGNL. The span at 29 to 49 shows a compositional bias: low complexity; it reads PTSSVASTKSSSKSPRATSRK. Composition is skewed to polar residues over residues 58–70 and 99–110; these read QFPNLTPNSTSSQ and TSFTNSSYKNDN. The span at 111-126 shows a compositional bias: low complexity; it reads GPSSLSDSRKSSGGNS. Over residues 223 to 233 the composition is skewed to basic residues; the sequence is IRQKSASKLKS. 2 stretches are compositionally biased toward polar residues: residues 253-273 and 281-297; these read DISNSRSTSESALSPTKSGPS and LHSTSTHQKTKSASSLY. Composition is skewed to low complexity over residues 298 to 320 and 342 to 353; these read RRSFISLRGSSSSNASSAKSPSN and SASPPASPSYPS. Polar residues-rich tracts occupy residues 386 to 396 and 407 to 420; these read NPQGHSLSSEN and TNVSSPLKQSSLPT. Threonine 407 carries the phosphothreonine modification. 2 positions are modified to phosphoserine: serine 411 and serine 491. The segment at 644–671 is disordered; it reads KPKPAPLTSENNVPLKSVKSKSSMRSGT. Low complexity predominate over residues 659–671; that stretch reads KSVKSKSSMRSGT. Position 747 is a phosphoserine (serine 747). Disordered stretches follow at residues 752–877, 895–939, 960–1021, and 1053–1116; these read LNLP…ASTH, KTDQ…RGNS, ADAP…TQDK, and TEGI…TPKR. The span at 765-777 shows a compositional bias: polar residues; it reads TPITENESKSSFQ. Basic and acidic residues predominate over residues 779 to 809; the sequence is LRKDEGTEIDFNHRRESPYTKPELAPKREAP. Positions 813–827 are enriched in polar residues; the sequence is ANTSPQRTLSTSKQN. Position 816 is a phosphoserine (serine 816). Low complexity-rich tracts occupy residues 851-870 and 914-925; these read QLLSSPIEASSSSPDSLTSS and NRSNSTVSTSNS. Residues 967 to 977 show a composition bias toward acidic residues; sequence DSDDSDDDSSS. The span at 994–1011 shows a compositional bias: basic and acidic residues; the sequence is NENKKDEKSDNSSTHSDE. Serine 1058 and serine 1061 each carry phosphoserine. Positions 1058 to 1083 are enriched in low complexity; it reads SPTSPKSLDSLLSPKNVASSRTEPST. Position 1134 is a phosphoserine; by PKC (serine 1134). Positions 1175-1440 constitute a Protein kinase domain; sequence WMKGEMIGKG…ANELLSHPFS (266 aa). Residues 1181–1189 and lysine 1204 each bind ATP; that span reads IGKGSFGAV. Catalysis depends on aspartate 1303, which acts as the Proton acceptor.

Belongs to the protein kinase superfamily. STE Ser/Thr protein kinase family. MAP kinase kinase kinase subfamily.

The protein localises to the cytoplasm. It catalyses the reaction L-seryl-[protein] + ATP = O-phospho-L-seryl-[protein] + ADP + H(+). The catalysed reaction is L-threonyl-[protein] + ATP = O-phospho-L-threonyl-[protein] + ADP + H(+). Serine/threonine protein kinase involved in a signal transduction pathway that plays a role in yeast cell morphogenesis and cell growth. This pathway seems to start by SMP3; then involve the kinase PKC1 that may act on this kinase. BCK1 probably phosphorylates MKK1 and MKK2 which themselves phosphorylate the MPK1 kinase. The polypeptide is Serine/threonine-protein kinase BCK1/SLK1/SSP31 (BCK1) (Saccharomyces cerevisiae (strain ATCC 204508 / S288c) (Baker's yeast)).